The primary structure comprises 2748 residues: Chalcone synthase cfoA (2748 aa).

Residues 13–511 (RHAGESCEKV…DTVPRTVIGK (499 aa)) are adenylation (A) domain. One can recognise a Carrier 1 domain in the interval 535–620 (DLIEALVMAE…AVSTYLHGRL (86 aa)). S579 is subject to O-(pantetheine 4'-phosphoryl)serine. Positions 641–1073 (VEPIAIVSMA…GTNSHIILEQ (433 aa)) constitute a Ketosynthase family 3 (KS3) domain. Active-site for beta-ketoacyl synthase activity residues include C813, H948, and H995. The region spanning 1196–1489 (FSGQGSWMPT…ATHGTVDKLL (294 aa)) is the Malonyl-CoA:ACP transacylase (MAT) domain. A dehydratase (DH) domain region spans residues 1561–1842 (LGHEMIFNAT…ENSFSMTMTD (282 aa)). The N-terminal hotdog fold stretch occupies residues 1563–1707 (HEMIFNATSI…GTFQLISQPN (145 aa)). The region spanning 1563 to 1866 (HEMIFNATSI…LRTWQPTVAG (304 aa)) is the PKS/mFAS DH domain. H1595 serves as the catalytic Proton acceptor; for dehydratase activity. The segment at 1722–1866 (AESDVNISEA…LRTWQPTVAG (145 aa)) is C-terminal hotdog fold. The active-site Proton donor; for dehydratase activity is the D1784. The 180-residue stretch at 2031 to 2210 (GTVLITGGTG…ALSLAWGPWA (180 aa)) folds into the Ketoreductase (KR) domain. Residues 2305–2383 (NRHDTLLGLV…ALVEYLLPRI (79 aa)) form the Carrier 2 domain. S2342 is subject to O-(pantetheine 4'-phosphoryl)serine. The disordered stretch occupies residues 2386–2426 (EPQPEVDTDSDASTTAGDTSVSRDSGKEDELSPSSSVTTLA). The segment covering 2396–2407 (DASTTAGDTSVS) has biased composition (low complexity). Positions 2519 to 2742 (VGLSVYSNLA…GAAGEIERWA (224 aa)) are thioester reductase (TE) domain.

In the N-terminal section; belongs to the NRP synthetase family. Pantetheine 4'-phosphate serves as cofactor.

It functions in the pathway secondary metabolite biosynthesis; flavonoid biosynthesis. Its function is as follows. Hybrid PKS-NRPS synthetase; part of the gene cluster that mediates the biosynthesis of chlorflavonin, a fungal flavonoid with acetolactate synthase inhibitory activity. Within the pathway, the PKS-NRPS cfoA, is responsible for the generation of the key precursor chalcone. The adenylation (A) domain activates benzoic acid or p-hydroxybenzoic acid which are transferred to the thiol group of the pantetheinyl residue of the T domain, and further transferred to the adjacent PKS portion of cfoA. Within the PKS portion of cfoA, benzoic acid or p-hydroxybenzoic acid act as starter units for respectively four malonyl-CoA molecules for elongation by the AT and KS domains. Afterwards, chalcone is cyclized through Claisen condensation and thereby released either spontaneously or catalyzed by the TE domain. Then, a new type of chalcone isomerase, cfoK, catalyzes the conversion of the chalcone into a flavanone by a histidine-mediated oxa-Michael addition mechanism. The desaturation of flavanone to flavone is catalyzed by a new type of flavone synthase, the flavin mononucleotide (FMN)-dependent oxidoreductase cfoJ. Monooxygenases cfoF, cfoG, and P450 cfoH are responsible for the hydroxylation of the flavonoid skeleton at sites C3, C8, and C2', respectively. Like cfoF, the dehydratase cfoI plays also a role in the hydroxylation of position C3. Methyltransferases cfoB, cfoC, and cfoD then catalyze the methylation of C7-OH, C8-OH, and C3-OH, respectively. Finally, the monooxygenase cfoE is responsible for the chlorination of flavonoid at position C3'. In Aspergillus candidus, this protein is Chalcone synthase cfoA.